A 406-amino-acid polypeptide reads, in one-letter code: Argininosuccinate synthase (406 aa).

Residues 10–18 (AYSGGLDTS) and A37 each bind ATP. Y88 and S93 together coordinate L-citrulline. G118 contributes to the ATP binding site. L-aspartate contacts are provided by T120, N124, and D125. An L-citrulline-binding site is contributed by N124. Residues R128, S179, S188, E264, and Y276 each coordinate L-citrulline.

Belongs to the argininosuccinate synthase family. Type 1 subfamily. In terms of assembly, homotetramer.

Its subcellular location is the cytoplasm. It catalyses the reaction L-citrulline + L-aspartate + ATP = 2-(N(omega)-L-arginino)succinate + AMP + diphosphate + H(+). It functions in the pathway amino-acid biosynthesis; L-arginine biosynthesis; L-arginine from L-ornithine and carbamoyl phosphate: step 2/3. In Dinoroseobacter shibae (strain DSM 16493 / NCIMB 14021 / DFL 12), this protein is Argininosuccinate synthase.